The chain runs to 1134 residues: Myosin-4 (1134 aa).

Residues 110–160 (REKLCVWCRVAANGQWHLGKIHSTSSSDDVCVMLSANDDVRTMEEIFPANP) enclose the Myosin N-terminal SH3-like domain. The region spanning 164–830 (EGVEDLTQLS…VISVLEERKK (667 aa)) is the Myosin motor domain. Residues 255–262 (GESGAGKT) and 304–312 (NDNSSRFGK) contribute to the ATP site. 2 actin-binding regions span residues 589–623 (LIEK…KQHL) and 710–732 (LFKL…KPNS). IQ domains lie at 832-861 (VLRG…AAVI), 855-884 (MRNA…SAIV), and 891-920 (ELDA…KNKP). The segment at 913–939 (STQQKNKPRNEKKKTRRKSTKRVSEDK) is disordered. Residues 918–933 (NKPRNEKKKTRRKSTK) are compositionally biased toward basic residues. Residues 953-999 (LADLQSRVLKVEAAIMQKEDENTALQEELQRFEERWLENETRMKSME) adopt a coiled-coil conformation.

It belongs to the TRAFAC class myosin-kinesin ATPase superfamily. Myosin family. Plant myosin class VIII subfamily. Homodimer.

Myosin heavy chain that is required for the cell cycle-regulated transport of various organelles and proteins for their segregation. Functions by binding with its tail domain to receptor proteins on organelles and exerting force with its N-terminal motor domain against actin filaments, thereby transporting its cargo along polarized actin cables. The protein is Myosin-4 (VIII-B) of Arabidopsis thaliana (Mouse-ear cress).